We begin with the raw amino-acid sequence, 634 residues long: Threonine--tRNA ligase (634 aa).

Positions 1–142 (MQLLLIHSDY…LSRSIRPEGA (142 aa)) are editing domain. Residues 214–513 (PHVELMRRLE…TEEGKVPMLP (300 aa)) are catalytic. Positions 306, 358, and 482 each coordinate Zn(2+).

Belongs to the class-II aminoacyl-tRNA synthetase family. In terms of assembly, homodimer. Requires Zn(2+) as cofactor.

It localises to the cytoplasm. It carries out the reaction tRNA(Thr) + L-threonine + ATP = L-threonyl-tRNA(Thr) + AMP + diphosphate + H(+). In terms of biological role, catalyzes the attachment of threonine to tRNA(Thr) in a two-step reaction: L-threonine is first activated by ATP to form Thr-AMP and then transferred to the acceptor end of tRNA(Thr). Edits incorrectly charged L-seryl-tRNA(Thr) probably via its editing domain (tested with total bovine tRNA). Activates L-serine, but does not detectably transfer it to tRNA (tested with total bovine tRNA). The polypeptide is Threonine--tRNA ligase (Methanosarcina mazei (strain ATCC BAA-159 / DSM 3647 / Goe1 / Go1 / JCM 11833 / OCM 88) (Methanosarcina frisia)).